Here is a 76-residue protein sequence, read N- to C-terminus: Small ribosomal subunit protein bS18 (76 aa).

The protein belongs to the bacterial ribosomal protein bS18 family. In terms of assembly, part of the 30S ribosomal subunit. Forms a tight heterodimer with protein bS6.

In terms of biological role, binds as a heterodimer with protein bS6 to the central domain of the 16S rRNA, where it helps stabilize the platform of the 30S subunit. The chain is Small ribosomal subunit protein bS18 from Alcanivorax borkumensis (strain ATCC 700651 / DSM 11573 / NCIMB 13689 / SK2).